The following is a 294-amino-acid chain: Ribosomal RNA small subunit methyltransferase A (294 aa).

S-adenosyl-L-methionine contacts are provided by N31, L33, G58, E79, D111, and N136.

Belongs to the class I-like SAM-binding methyltransferase superfamily. rRNA adenine N(6)-methyltransferase family. RsmA subfamily.

Its subcellular location is the cytoplasm. It carries out the reaction adenosine(1518)/adenosine(1519) in 16S rRNA + 4 S-adenosyl-L-methionine = N(6)-dimethyladenosine(1518)/N(6)-dimethyladenosine(1519) in 16S rRNA + 4 S-adenosyl-L-homocysteine + 4 H(+). Specifically dimethylates two adjacent adenosines (A1518 and A1519) in the loop of a conserved hairpin near the 3'-end of 16S rRNA in the 30S particle. May play a critical role in biogenesis of 30S subunits. The chain is Ribosomal RNA small subunit methyltransferase A from Lactobacillus helveticus (strain DPC 4571).